The primary structure comprises 145 residues: Transcription antitermination protein NusB (145 aa).

This sequence belongs to the NusB family.

Its function is as follows. Involved in transcription antitermination. Required for transcription of ribosomal RNA (rRNA) genes. Binds specifically to the boxA antiterminator sequence of the ribosomal RNA (rrn) operons. The polypeptide is Transcription antitermination protein NusB (Psychromonas ingrahamii (strain DSM 17664 / CCUG 51855 / 37)).